An 872-amino-acid polypeptide reads, in one-letter code: Leucine--tRNA ligase (872 aa).

Residues 42–52 (PYPSGSLHMGH) carry the 'HIGH' region motif. Residues 634 to 638 (TMSKS) carry the 'KMSKS' region motif. Lysine 637 contacts ATP.

This sequence belongs to the class-I aminoacyl-tRNA synthetase family.

It is found in the cytoplasm. The enzyme catalyses tRNA(Leu) + L-leucine + ATP = L-leucyl-tRNA(Leu) + AMP + diphosphate. The sequence is that of Leucine--tRNA ligase from Trichormus variabilis (strain ATCC 29413 / PCC 7937) (Anabaena variabilis).